A 327-amino-acid polypeptide reads, in one-letter code: Zinc transport protein ZntB (327 aa).

The Cytoplasmic portion of the chain corresponds to 1 to 271 (MESFAGKELQ…AMNRRTYTMS (271 aa)). A helical membrane pass occupies residues 272–292 (LLAMVFLPTTFLTGLFGVNLG). The Periplasmic portion of the chain corresponds to 293-300 (GIPGGDAP). Residues 301 to 321 (FGFFTFCLMLVILVGGVAWWL) traverse the membrane as a helical segment. Residues 322–327 (KRSKWL) are Cytoplasmic-facing.

This sequence belongs to the CorA metal ion transporter (MIT) (TC 1.A.35) family.

It is found in the cell inner membrane. The catalysed reaction is Zn(2+)(out) + H(+)(out) = Zn(2+)(in) + H(+)(in). Its function is as follows. Zinc transporter. Acts as a Zn(2+):proton symporter, which likely mediates zinc ion uptake. This chain is Zinc transport protein ZntB, found in Pectobacterium atrosepticum (strain SCRI 1043 / ATCC BAA-672) (Erwinia carotovora subsp. atroseptica).